A 171-amino-acid chain; its full sequence is MDYFTFFGLPARYQLDTQALSLRFQDLQRQYHPDKFASGSQAEQLAAVQQSATINQAWQTLRHPLMRAEYLLSLHGFDLASEQHTVRDTAFLMEQLELREELDEIEQAKDEARLESFIKRVKKMFDTRHQLMVEQLDNEAWDAAADTVRKLRFLDKLRSSAEQLEEKLLDF.

The region spanning 2 to 74 (DYFTFFGLPA…LMRAEYLLSL (73 aa)) is the J domain.

It belongs to the HscB family. Interacts with HscA and stimulates its ATPase activity. Interacts with IscU.

Its function is as follows. Co-chaperone involved in the maturation of iron-sulfur cluster-containing proteins. Seems to help targeting proteins to be folded toward HscA. This is Co-chaperone protein HscB from Shigella sonnei (strain Ss046).